Reading from the N-terminus, the 711-residue chain is Zinc finger CCCH domain-containing protein 32 (711 aa).

Low complexity predominate over residues 1–21 (MEADGAAAAAAAGEASTEAGA). The tract at residues 1–23 (MEADGAAAAAAAGEASTEAGARP) is disordered. 3 C3H1-type zinc fingers span residues 31 to 60 (LRRN…HSDN), 62 to 88 (RMNP…HPPI), and 112 to 139 (GKQL…HGPQ). Disordered regions lie at residues 221-246 (KSEK…GDHP), 339-376 (RFNG…HSER), 405-561 (SSLA…EGPK), and 573-701 (AAWA…DDDD). Basic and acidic residues-rich tracts occupy residues 364-376 (SERS…HSER) and 413-427 (RNGE…YRER). Positions 428–437 (AHGHRSHRDH) are enriched in basic residues. 2 stretches are compositionally biased toward basic and acidic residues: residues 460–509 (SPDR…RRSS) and 585–594 (KQDKSAEVSH). Composition is skewed to acidic residues over residues 648–663 (EDII…DADN) and 686–701 (ENAY…DDDD).

In Oryza sativa subsp. japonica (Rice), this protein is Zinc finger CCCH domain-containing protein 32.